Here is a 186-residue protein sequence, read N- to C-terminus: Ribosome-recycling factor (186 aa).

Belongs to the RRF family.

Its subcellular location is the cytoplasm. Functionally, responsible for the release of ribosomes from messenger RNA at the termination of protein biosynthesis. May increase the efficiency of translation by recycling ribosomes from one round of translation to another. In Paraburkholderia phymatum (strain DSM 17167 / CIP 108236 / LMG 21445 / STM815) (Burkholderia phymatum), this protein is Ribosome-recycling factor.